The following is a 551-amino-acid chain: Eukaryotic translation initiation factor 3 subunit D-2 (551 aa).

The interval 108–152 is disordered; that stretch reads RARGRTGRGNATLGGLGGPVAGGSTANSTKYGKGRNTRNAQNMGR. Residues 119–128 show a composition bias toward gly residues; sequence TLGGLGGPVA. Residues 290–304 form an RNA gate region; the sequence is QFDLLTVNETSLEPP. Residues 530–551 are disordered; the sequence is AFDSDGDDESESSEPFGNSIDN. The segment covering 531-541 has biased composition (acidic residues); the sequence is FDSDGDDESES.

It belongs to the eIF-3 subunit D family. As to quaternary structure, component of the eukaryotic translation initiation factor 3 (eIF-3) complex. The eIF-3 complex interacts with pix.

It localises to the cytoplasm. Functionally, mRNA cap-binding component of the eukaryotic translation initiation factor 3 (eIF-3) complex, which is involved in protein synthesis of a specialized repertoire of mRNAs and, together with other initiation factors, stimulates binding of mRNA and methionyl-tRNAi to the 40S ribosome. The eIF-3 complex specifically targets and initiates translation of a subset of mRNAs involved in cell proliferation. In the eIF-3 complex, eif3d specifically recognizes and binds the 7-methylguanosine cap of a subset of mRNAs. The protein is Eukaryotic translation initiation factor 3 subunit D-2 of Drosophila yakuba (Fruit fly).